The following is a 367-amino-acid chain: tRNA-specific 2-thiouridylase MnmA (367 aa).

Residues 13–20 (GLSGGVDS) and methionine 39 each bind ATP. The interval 99–101 (NPD) is interaction with target base in tRNA. The Nucleophile role is filled by cysteine 104. A disulfide bridge connects residues cysteine 104 and cysteine 200. Glycine 128 lines the ATP pocket. The tract at residues 150–152 (KDQ) is interaction with tRNA. Cysteine 200 serves as the catalytic Cysteine persulfide intermediate. Residues 307 to 308 (RY) form an interaction with tRNA region.

Belongs to the MnmA/TRMU family.

It is found in the cytoplasm. The catalysed reaction is S-sulfanyl-L-cysteinyl-[protein] + uridine(34) in tRNA + AH2 + ATP = 2-thiouridine(34) in tRNA + L-cysteinyl-[protein] + A + AMP + diphosphate + H(+). Catalyzes the 2-thiolation of uridine at the wobble position (U34) of tRNA, leading to the formation of s(2)U34. The protein is tRNA-specific 2-thiouridylase MnmA of Neisseria meningitidis serogroup B (strain ATCC BAA-335 / MC58).